The chain runs to 119 residues: Large ribosomal subunit protein bL17 (119 aa).

The protein belongs to the bacterial ribosomal protein bL17 family. In terms of assembly, part of the 50S ribosomal subunit. Contacts protein L32.

This chain is Large ribosomal subunit protein bL17, found in Acholeplasma laidlawii (strain PG-8A).